The primary structure comprises 145 residues: Large ribosomal subunit protein uL15 (145 aa).

Residues 1–54 (MKLNELKYTPGSKKEATRVGRGMASGKGKTATRGHKGQNSRSGGGVRPGFEGGQ) are disordered. A compositionally biased stretch (gly residues) spans 42 to 52 (SGGGVRPGFEG).

This sequence belongs to the universal ribosomal protein uL15 family. In terms of assembly, part of the 50S ribosomal subunit.

Binds to the 23S rRNA. The polypeptide is Large ribosomal subunit protein uL15 (Mycoplasma capricolum subsp. capricolum (strain California kid / ATCC 27343 / NCTC 10154)).